The primary structure comprises 271 residues: Putative pyruvate, phosphate dikinase regulatory protein (271 aa).

153–160 (GVSRTSKT) provides a ligand contact to ADP.

Belongs to the pyruvate, phosphate/water dikinase regulatory protein family. PDRP subfamily.

It carries out the reaction N(tele)-phospho-L-histidyl/L-threonyl-[pyruvate, phosphate dikinase] + ADP = N(tele)-phospho-L-histidyl/O-phospho-L-threonyl-[pyruvate, phosphate dikinase] + AMP + H(+). It catalyses the reaction N(tele)-phospho-L-histidyl/O-phospho-L-threonyl-[pyruvate, phosphate dikinase] + phosphate + H(+) = N(tele)-phospho-L-histidyl/L-threonyl-[pyruvate, phosphate dikinase] + diphosphate. Its function is as follows. Bifunctional serine/threonine kinase and phosphorylase involved in the regulation of the pyruvate, phosphate dikinase (PPDK) by catalyzing its phosphorylation/dephosphorylation. The chain is Putative pyruvate, phosphate dikinase regulatory protein from Shouchella clausii (strain KSM-K16) (Alkalihalobacillus clausii).